Here is an 885-residue protein sequence, read N- to C-terminus: DNA replication licensing factor REC (885 aa).

A disordered region spans residues 36-76 (RVIPAGGNRQPNQGEPGAPDAPSVPPATRQPRGWSRTAGKR). A C4-type zinc finger spans residues 281 to 308 (CSRCQMEIAMRQRGTFQPRPYQCKRSEC). In terms of domain architecture, MCM spans 430-627 (SFKLLVQSIA…ERDMSLTAHV (198 aa)). Position 473–480 (473–480 (GDPGIGKT)) interacts with ATP. The segment covering 796 to 805 (SLKEGSSRQG) has biased composition (polar residues). The interval 796–818 (SLKEGSSRQGTRGGGGAGGGAGK) is disordered. A compositionally biased stretch (gly residues) spans 806–817 (TRGGGGAGGGAG).

It belongs to the MCM family.

The protein localises to the nucleus. Its function is as follows. Required for meiotic DNA recombination in females. Probably not involved in DNA repair and recombination in somatic cells. This Drosophila melanogaster (Fruit fly) protein is DNA replication licensing factor REC (rec).